A 369-amino-acid chain; its full sequence is Peptide chain release factor 2 (369 aa).

Position 251 is an N5-methylglutamine (Q251).

It belongs to the prokaryotic/mitochondrial release factor family. In terms of processing, methylated by PrmC. Methylation increases the termination efficiency of RF2.

It is found in the cytoplasm. Functionally, peptide chain release factor 2 directs the termination of translation in response to the peptide chain termination codons UGA and UAA. In Thermotoga maritima (strain ATCC 43589 / DSM 3109 / JCM 10099 / NBRC 100826 / MSB8), this protein is Peptide chain release factor 2 (prfB).